The following is a 544-amino-acid chain: Histone-arginine methyltransferase CARMER (544 aa).

Residues A150–H459 enclose the SAM-dependent MTase PRMT-type domain. The S-adenosyl-L-methionine site is built by Q163, R172, G196, E218, E247, and T275. Positions D505 to L520 are enriched in polar residues. The interval D505–N527 is disordered. The residue at position 514 (R514) is an Asymmetric dimethylarginine; by autocatalysis.

The protein belongs to the class I-like SAM-binding methyltransferase superfamily. Protein arginine N-methyltransferase family. As to quaternary structure, homodimer. The dimethylated protein is the major form.

It localises to the cytoplasm. Its subcellular location is the nucleus. The catalysed reaction is L-arginyl-[protein] + 2 S-adenosyl-L-methionine = N(omega),N(omega)-dimethyl-L-arginyl-[protein] + 2 S-adenosyl-L-homocysteine + 2 H(+). Its function is as follows. Methylates (mono- and asymmetric dimethylation) the guanidino nitrogens of arginyl residues in proteins. May methylate histone H3 at 'Arg-17' and activate transcription via chromatin remodeling. This chain is Histone-arginine methyltransferase CARMER (Art4), found in Drosophila grimshawi (Hawaiian fruit fly).